We begin with the raw amino-acid sequence, 357 residues long: U5 small nuclear ribonucleoprotein 40 kDa protein (357 aa).

A Glycyl lysine isopeptide (Lys-Gly) (interchain with G-Cter in SUMO2) cross-link involves residue Lys-18. Residue Arg-21 is modified to Asymmetric dimethylarginine. WD repeat units lie at residues 64 to 103 (GHEG…GNYA), 107 to 146 (GYSG…RVKR), 149 to 189 (GHTS…AIQT), 191 to 230 (QNTY…LTYT), 233 to 272 (GHAD…PKER), 283 to 322 (NFEK…ILYK), and 325 to 357 (GHAG…GEIQ). Lys-270 participates in a covalent cross-link: Glycyl lysine isopeptide (Lys-Gly) (interchain with G-Cter in SUMO2).

Component of the pre-catalytic and catalytic spliceosome complexes. Component of the postcatalytic spliceosome P complex. Part of the U5 snRNP complex. Interacts with PRPF8. Component of the U4/U6-U5 tri-snRNP complex composed of the U4, U6 and U5 snRNAs and at least PRPF3, PRPF4, PRPF6, PRPF8, PRPF31, SNRNP200, TXNL4A, WDR57, SNRNP40, DDX23, CD2BP2, PPIH, SNU13, EFTUD2, SART1 and USP39. Component of the minor spliceosome, which splices U12-type introns.

The protein resides in the nucleus. Functionally, required for pre-mRNA splicing as component of the activated spliceosome. Component of the U5 small nuclear ribonucleoprotein (snRNP) complex and the U4/U6-U5 tri-snRNP complex, building blocks of the spliceosome. As a component of the minor spliceosome, involved in the splicing of U12-type introns in pre-mRNAs. The sequence is that of U5 small nuclear ribonucleoprotein 40 kDa protein (SNRNP40) from Pongo abelii (Sumatran orangutan).